The chain runs to 259 residues: GTP-binding protein RHO4 (259 aa).

59-66 (GDGATGKT) contacts GTP. The Effector region motif lies at 81–89 (YVPTIFENY). Residues 107-111 (DTAGQ) and 165-168 (LKSD) each bind GTP. Residue cysteine 256 is modified to Cysteine methyl ester. A lipid anchor (S-geranylgeranyl cysteine) is attached at cysteine 256. Positions 257–259 (VVL) are cleaved as a propeptide — removed in mature form.

The protein belongs to the small GTPase superfamily. Rho family.

It is found in the cell membrane. The protein is GTP-binding protein RHO4 (RHO4) of Eremothecium gossypii (strain ATCC 10895 / CBS 109.51 / FGSC 9923 / NRRL Y-1056) (Yeast).